A 192-amino-acid chain; its full sequence is GTP cyclohydrolase-2 (192 aa).

50-54 (RLHSE) lines the GTP pocket. Residues Cys55, Cys66, and Cys68 each contribute to the Zn(2+) site. Residues 92–94 (EGR) and Thr114 each bind GTP. The active-site Proton acceptor is Asp126. Arg128 (nucleophile) is an active-site residue. GTP contacts are provided by Thr149 and Lys154.

Belongs to the GTP cyclohydrolase II family. Requires Zn(2+) as cofactor.

It carries out the reaction GTP + 4 H2O = 2,5-diamino-6-hydroxy-4-(5-phosphoribosylamino)-pyrimidine + formate + 2 phosphate + 3 H(+). The protein operates within cofactor biosynthesis; riboflavin biosynthesis; 5-amino-6-(D-ribitylamino)uracil from GTP: step 1/4. Its function is as follows. Catalyzes the conversion of GTP to 2,5-diamino-6-ribosylamino-4(3H)-pyrimidinone 5'-phosphate (DARP), formate and pyrophosphate. In Helicobacter pylori (strain Shi470), this protein is GTP cyclohydrolase-2.